Consider the following 387-residue polypeptide: Succinate--CoA ligase [ADP-forming] subunit beta (387 aa).

One can recognise an ATP-grasp domain in the interval 9–245 (KDLLESYGLK…KSQENAKELK (237 aa)). ATP is bound by residues K46, 53–55 (GRG), E100, Y103, and E108. The Mg(2+) site is built by N200 and D214. Residues N265 and 322–324 (GIV) each bind substrate.

The protein belongs to the succinate/malate CoA ligase beta subunit family. Heterotetramer of two alpha and two beta subunits. Requires Mg(2+) as cofactor.

The catalysed reaction is succinate + ATP + CoA = succinyl-CoA + ADP + phosphate. It catalyses the reaction GTP + succinate + CoA = succinyl-CoA + GDP + phosphate. It participates in carbohydrate metabolism; tricarboxylic acid cycle; succinate from succinyl-CoA (ligase route): step 1/1. Its function is as follows. Succinyl-CoA synthetase functions in the citric acid cycle (TCA), coupling the hydrolysis of succinyl-CoA to the synthesis of either ATP or GTP and thus represents the only step of substrate-level phosphorylation in the TCA. The beta subunit provides nucleotide specificity of the enzyme and binds the substrate succinate, while the binding sites for coenzyme A and phosphate are found in the alpha subunit. This chain is Succinate--CoA ligase [ADP-forming] subunit beta, found in Francisella tularensis subsp. mediasiatica (strain FSC147).